Reading from the N-terminus, the 170-residue chain is Protein AIG2 A (170 aa).

Substrate is bound at residue 15–20 (YGSFQE). The active-site Proton acceptor is the glutamate 83. The segment covering 147–162 (KNPNGRSREEFEKFVQ) has biased composition (basic and acidic residues). The disordered stretch occupies residues 147-170 (KNPNGRSREEFEKFVQDDSSPASA).

Belongs to the gamma-glutamylcyclotransferase family. As to expression, ubiquitous.

In terms of biological role, putative gamma-glutamylcyclotransferase. This is Protein AIG2 A from Arabidopsis thaliana (Mouse-ear cress).